Here is a 290-residue protein sequence, read N- to C-terminus: MEKAVSQFKDFVQSQHHDSYAAIQQADHRGHVVAITGASSGIGKAIAVSYGRCGVSALVLIARRPLDDVKSTVIAASVAAGHSPPEVMTVAANVADETSIYLAATKVKETLGHIDILVNNAGRVGTWGNVEAGEAQDWWQTWEVNIKGVYLTTRAFIPMLLQGKQKTIVNIGSMGVVSPVANLSAYLPSKLALIQFTNIVALEYSSQGLVAFTAYPGDVATELTGSFPEAMSPYFVDTPELPGDSIAWLTQRRLEWLSGRFVSLRWDLPELVSRQSEIVEGDKLRVTMRV.

NADP(+) is bound by residues isoleucine 35, asparagine 120, arginine 154, tyrosine 186, lysine 190, valine 219, and threonine 221. Catalysis depends on tyrosine 186, which acts as the Proton acceptor. Lysine 190 functions as the Lowers pKa of active site Tyr in the catalytic mechanism.

Belongs to the short-chain dehydrogenases/reductases (SDR) family.

Its pathway is secondary metabolite biosynthesis; terpenoid biosynthesis. In terms of biological role, short chain dehydrogenase; part of the gene cluster that mediates the biosynthesis of anditomin, a fungal meroterpenoid. The first step of the pathway is the synthesis of 3,5-dimethylorsellinic acid (DMOA) by the polyketide synthase andM. DMOA is then converted to the phthalide compound 5,7-dihydroxy-4,6-dimethylphthalide (DHDMP) by the cytochrome P450 monooxygenase andK, which is further prenylated by the prenyltransferase andD to yield farnesyl-DHDMP. Further epoxidation by the FAD-dependent monooxygenase andE leads to epoxyfarnesyl-DHDMP. The next step involves the terpene cyclase andB that converts epoxyfarnesyl-DHDMP into preandiloid A through opening of the epoxide ring followed by the cyclization of the farnesyl moiety. Preandiloid A is in turn oxidized at the C-3 hydroxyl group to yield preandiloid B by the dehydrogenase andC. The dioxygenase andA is solely responsible for the dehydrogenation of preandiloid B leading to the enone preandiloid C, as well as for the intriguing structural rearrangement to generate the bicyclo[2.2.2]octane core, transforming preandiloid C into andiconin. FAD-binding monooxygenase andJ then produces andilesin D which is reduced by dehydrogenase andI to yield andilesin A. Action of acetyltransferase andG followed by a spontaneous acetate elimination leads then to andilesin B, which is in turn substrate of the short chain dehydrogenase andH to yield andilesin C. Finally, the dioxygenase andF catalyzes the transformation of andilesin C to anditomin. The polypeptide is Short chain dehydrogenase andI (Emericella variicolor (Aspergillus stellatus)).